The following is a 359-amino-acid chain: UPF0284 protein MAE_56900 (359 aa).

The protein belongs to the UPF0284 family.

The protein is UPF0284 protein MAE_56900 of Microcystis aeruginosa (strain NIES-843 / IAM M-2473).